A 293-amino-acid polypeptide reads, in one-letter code: Transcription elongation factor S-II (293 aa).

In terms of domain architecture, TFIIS N-terminal spans 4 to 81; it reads ADIRSAKAAL…KKWKADVSKG (78 aa). The interval 81 to 123 is disordered; it reads GRPLKTTTTTSSTPSKHADVGSQAQKQVQKQSSSGQRTFKSDN. Low complexity predominate over residues 100–116; sequence VGSQAQKQVQKQSSSGQ. The region spanning 133-248 is the TFIIS central domain; the sequence is IRNNCIGLMY…HAQGAKPQKA (116 aa). The segment at 251–291 adopts a TFIIS-type zinc-finger fold; sequence DLFTCGKCKQKKVSYYQMQTRSADEPMTTFCECTVCGNRWK. 4 residues coordinate Zn(2+): Cys255, Cys258, Cys283, and Cys286.

This sequence belongs to the TFS-II family.

The protein localises to the nucleus. Necessary for efficient RNA polymerase II transcription elongation past template-encoded arresting sites. The arresting sites in DNA have the property of trapping a certain fraction of elongating RNA polymerases that pass through, resulting in locked ternary complexes. Cleavage of the nascent transcript by S-II allows the resumption of elongation from the new 3'-terminus. The sequence is that of Transcription elongation factor S-II (tfs1) from Schizosaccharomyces pombe (strain 972 / ATCC 24843) (Fission yeast).